A 114-amino-acid polypeptide reads, in one-letter code: Non-specific lipid-transfer protein 2 (114 aa).

Positions 1-23 (MEMFGKIACFVVFCMVVVAPHAE) are cleaved as a signal peptide. 4 disulfides stabilise this stretch: cysteine 27–cysteine 73, cysteine 37–cysteine 50, cysteine 51–cysteine 96, and cysteine 71–cysteine 110.

The protein belongs to the plant LTP family.

Functionally, plant non-specific lipid-transfer proteins transfer phospholipids as well as galactolipids across membranes. May play a role in wax or cutin deposition in the cell walls of expanding epidermal cells and certain secretory tissues. The protein is Non-specific lipid-transfer protein 2 (LE16) of Solanum lycopersicum (Tomato).